The chain runs to 688 residues: Polyribonucleotide nucleotidyltransferase (688 aa).

The Mg(2+) site is built by D484 and D490. Positions P550–I609 constitute a KH domain. The 63-residue stretch at D626–A688 folds into the S1 motif domain.

It belongs to the polyribonucleotide nucleotidyltransferase family. Mg(2+) is required as a cofactor.

The protein resides in the cytoplasm. The enzyme catalyses RNA(n+1) + phosphate = RNA(n) + a ribonucleoside 5'-diphosphate. Its function is as follows. Involved in mRNA degradation. Catalyzes the phosphorolysis of single-stranded polyribonucleotides processively in the 3'- to 5'-direction. The protein is Polyribonucleotide nucleotidyltransferase of Helicobacter pylori (strain HPAG1).